The primary structure comprises 523 residues: Anthranilate synthase component 1 (523 aa).

L-tryptophan-binding positions include Ser45 and 296-298 (PYM). Chorismate is bound at residue 333-334 (GT). Mg(2+) is bound at residue Glu366. Residues Tyr454, Arg474, 488 to 490 (GAG), and Gly490 contribute to the chorismate site. Residue Glu503 coordinates Mg(2+).

It belongs to the anthranilate synthase component I family. Heterotetramer consisting of two non-identical subunits: a beta subunit (TrpG) and a large alpha subunit (TrpE). It depends on Mg(2+) as a cofactor.

The enzyme catalyses chorismate + L-glutamine = anthranilate + pyruvate + L-glutamate + H(+). The protein operates within amino-acid biosynthesis; L-tryptophan biosynthesis; L-tryptophan from chorismate: step 1/5. Feedback inhibited by tryptophan. Functionally, part of a heterotetrameric complex that catalyzes the two-step biosynthesis of anthranilate, an intermediate in the biosynthesis of L-tryptophan. In the first step, the glutamine-binding beta subunit (TrpG) of anthranilate synthase (AS) provides the glutamine amidotransferase activity which generates ammonia as a substrate that, along with chorismate, is used in the second step, catalyzed by the large alpha subunit of AS (TrpE) to produce anthranilate. In the absence of TrpG, TrpE can synthesize anthranilate directly from chorismate and high concentrations of ammonia. This chain is Anthranilate synthase component 1 (trpE), found in Vibrio cholerae serotype O1 (strain ATCC 39315 / El Tor Inaba N16961).